Reading from the N-terminus, the 513-residue chain is ATP synthase subunit alpha (513 aa).

G169–T176 serves as a coordination point for ATP.

Belongs to the ATPase alpha/beta chains family. In terms of assembly, F-type ATPases have 2 components, CF(1) - the catalytic core - and CF(0) - the membrane proton channel. CF(1) has five subunits: alpha(3), beta(3), gamma(1), delta(1), epsilon(1). CF(0) has three main subunits: a(1), b(2) and c(9-12). The alpha and beta chains form an alternating ring which encloses part of the gamma chain. CF(1) is attached to CF(0) by a central stalk formed by the gamma and epsilon chains, while a peripheral stalk is formed by the delta and b chains.

The protein localises to the cell inner membrane. The catalysed reaction is ATP + H2O + 4 H(+)(in) = ADP + phosphate + 5 H(+)(out). In terms of biological role, produces ATP from ADP in the presence of a proton gradient across the membrane. The alpha chain is a regulatory subunit. This chain is ATP synthase subunit alpha, found in Klebsiella pneumoniae subsp. pneumoniae (strain ATCC 700721 / MGH 78578).